We begin with the raw amino-acid sequence, 513 residues long: Histidine ammonia-lyase (513 aa).

Residues 145-147 constitute a cross-link (5-imidazolinone (Ala-Gly)); that stretch reads ASG. At Ser146 the chain carries 2,3-didehydroalanine (Ser).

The protein belongs to the PAL/histidase family. Contains an active site 4-methylidene-imidazol-5-one (MIO), which is formed autocatalytically by cyclization and dehydration of residues Ala-Ser-Gly.

It is found in the cytoplasm. The enzyme catalyses L-histidine = trans-urocanate + NH4(+). The protein operates within amino-acid degradation; L-histidine degradation into L-glutamate; N-formimidoyl-L-glutamate from L-histidine: step 1/3. This chain is Histidine ammonia-lyase, found in Vibrio vulnificus (strain CMCP6).